The sequence spans 1064 residues: WD repeat-containing protein on Y chromosome (1064 aa).

WD repeat units lie at residues glutamate 150 to alanine 194, arginine 317 to alanine 356, glycine 360 to threonine 399, threonine 450 to isoleucine 489, isoleucine 502 to asparagine 541, phenylalanine 589 to serine 629, lysine 742 to serine 781, and glycine 825 to leucine 864. A disordered region spans residues serine 1022–arginine 1044.

In Drosophila ananassae (Fruit fly), this protein is WD repeat-containing protein on Y chromosome.